A 274-amino-acid chain; its full sequence is Aspartate/glutamate leucyltransferase (274 aa).

Belongs to the R-transferase family. Bpt subfamily.

Its subcellular location is the cytoplasm. The catalysed reaction is N-terminal L-glutamyl-[protein] + L-leucyl-tRNA(Leu) = N-terminal L-leucyl-L-glutamyl-[protein] + tRNA(Leu) + H(+). The enzyme catalyses N-terminal L-aspartyl-[protein] + L-leucyl-tRNA(Leu) = N-terminal L-leucyl-L-aspartyl-[protein] + tRNA(Leu) + H(+). In terms of biological role, functions in the N-end rule pathway of protein degradation where it conjugates Leu from its aminoacyl-tRNA to the N-termini of proteins containing an N-terminal aspartate or glutamate. This is Aspartate/glutamate leucyltransferase from Ruegeria sp. (strain TM1040) (Silicibacter sp.).